Consider the following 498-residue polypeptide: Nucleobase transporter PlAzg2 (498 aa).

13 helical membrane passes run 88–108, 118–138, 142–162, 169–189, 203–223, 236–256, 259–279, 312–332, 357–377, 388–408, 412–432, 443–463, and 478–498; these read LLAGTVSFFAAVYIIIVNSSI, AGIIATILASAIGCFIMGLWG, LVIVPGMGINAMFTYTLVQGM, ALAAVMMSGICFFAISMTSLV, AISVGIGLMLVLIGLHKGGVI, FADPGVLVTLATLALTCILYI, VPGNLLLAIIGGSALAYLFKA, TLVIAVFSLTLVIVFENVGLI, ILSGIFGTSPTVSTVEAAAGI, IATGTLFLLSFIAMPVITLVP, VAPILIFIGGLMMPAVRHISF, FIIAFIPLMHSIVDGIAIGFI, and VKPLFYIISLLFVMHFVLQTM.

Belongs to the nucleobase:cation symporter-2 (NCS2) (TC 2.A.40) family. Azg-like subfamily.

Its subcellular location is the cell membrane. With respect to regulation, inhibited by the proton gradient disruptor carbonyl cyanide m-chlorophenylhydrazone (CCCP), but not by the sodium gradient disruptor ouabain. Transports adenine, guanine, hypoxanthine, xanthine, cytosine and uracil. Transport is probably proton-dependent. The protein is Nucleobase transporter PlAzg2 of Paenibacillus larvae subsp. larvae (strain NRRL B-3650 / LMG 16245).